The following is a 719-amino-acid chain: Protein ENHANCED DISEASE RESISTANCE 2-like (719 aa).

Positions 3 to 110 (KVVYEGWMVR…WKEKIECVID (108 aa)) constitute a PH domain. Residues 134 to 173 (AGRTASSSDHESPFSALEDENDSQRDLLRRTTIGNGPPES) are disordered. In terms of domain architecture, START spans 180–392 (EFDAELSNQS…VSGLREWFSQ (213 aa)). Positions 414 to 478 (ALGKGGKHHH…ETDAKKTEEP (65 aa)) are disordered. Over residues 426–439 (SLSIDQTNGASRNS) the composition is skewed to polar residues. Positions 442 to 461 (MDEDSDDDDEFQIPDSEPEP) are enriched in acidic residues. Over residues 462 to 477 (ETSKQDQETDAKKTEE) the composition is skewed to basic and acidic residues. A helical membrane pass occupies residues 665–685 (GVLGLVIGVITSLVVEMAFLV).

The protein localises to the endoplasmic reticulum membrane. The protein resides in the cell membrane. It localises to the endosome membrane. Functionally, binds to phosphatidylinositol-4-phosphate (PtdIns(4)P). May regulate the salicylic acid- (SA-) mediated resistance to pathogens. This is Protein ENHANCED DISEASE RESISTANCE 2-like (EDR2L) from Arabidopsis thaliana (Mouse-ear cress).